The following is a 358-amino-acid chain: Methylthioribose-1-phosphate isomerase (358 aa).

Substrate contacts are provided by residues arginine 54–alanine 56, arginine 96, and glutamine 205. Catalysis depends on aspartate 246, which acts as the Proton donor. Position 256-257 (asparagine 256–lysine 257) interacts with substrate.

This sequence belongs to the eIF-2B alpha/beta/delta subunits family. MtnA subfamily.

The catalysed reaction is 5-(methylsulfanyl)-alpha-D-ribose 1-phosphate = 5-(methylsulfanyl)-D-ribulose 1-phosphate. It participates in amino-acid biosynthesis; L-methionine biosynthesis via salvage pathway; L-methionine from S-methyl-5-thio-alpha-D-ribose 1-phosphate: step 1/6. In terms of biological role, catalyzes the interconversion of methylthioribose-1-phosphate (MTR-1-P) into methylthioribulose-1-phosphate (MTRu-1-P). The polypeptide is Methylthioribose-1-phosphate isomerase (Pseudomonas aeruginosa (strain UCBPP-PA14)).